A 380-amino-acid chain; its full sequence is MDFALLPPEVNSARMYTGPGAGSLLAAAGGWDSLAAELATTAEAYGSVLSGLAALHWRGPAAESMAVTAAPYIGWLYTTAEKTQQTAIQARAAALAFEQAYAMTLPPPVVAANRIQLLALIATNFFGQNTAAIAATEAQYAEMWAQDAAAMYGYATASAAAALLTPFSPPRQTTNPAGLTAQAAAVSQATDPLSLLIETVTQALQALTIPSFIPEDFTFLDAIFAGYATVGVTQDVESFVAGTIGAESNLGLLNVGDENPAEVTPGDFGIGELVSATSPGGGVSASGAGGAASVGNTVLASVGRANSIGQLSVPPSWAAPSTRPVSALSPAGLTTLPGTDVAEHGMPGVPGVPVAAGRASGVLPRYGVRLTVMAHPPAAG.

The residue at position 1 (M1) is an N-acetylmethionine.

This sequence belongs to the mycobacterial PPE family. In terms of assembly, interacts with PE19 and PE25.

It localises to the cell outer membrane. Small molecule-selective channel required for the uptake of nutrients across the outer mycomembrane. Transports glycerol and glucose. Involved in sensitivity to M.tuberculosis growth inhibitory agrichemical 3,3-bis-di(methylsulfonyl)propionamide (3bMP1). Transports maltose and lactose disaccharides. Involved in sensitivity to bactericidal thio-disaccharide T-6 compound (1,6-anhydro-3-deoxy-4-S-(2,3,4,6-tetra-O-acetyl-beta-D-glucopyranosyl)-D-glycero-hexopyranos-2-ulose). Transports extracellular trehalose, a component of the cell envelope, and trehalose analog, 6-azido trehalose (6-TreAz), which has antimycobacterial activity. Functionally, plays a role in response to starvation and stress, likely environment within the host. Inhibits canonical autophagy in infected mouse RAW264.7 macrophages. Inhibits autophagy and enhances intracellular bacterial survival when expressed in human macrophage-like THP-1 cells. Inhibits Toll-like receptor 2 (TLR2)-dependent signaling leading to autophagy inhibition, increased intracellular bacterial survival, reduced phagocytosis and reduced secretion of interleukin 6 (IL-6) and IL-1 in infected mouse primary bone marrow-derived macrophage (BMDM) cells. Required for virulence and persistence in the lungs and spleens of intranasally infected C57BL/6J mice. Blocks the antibacterial effects of TLR2 activation, suppresses MHC class II-dependent antigen presentation, and reduces IFN-gamma and TNF-alpha-producing CD4(+) T cells during infection in C57BL/6J mice. In Mycobacterium tuberculosis (strain CDC 1551 / Oshkosh), this protein is Transporter PPE51 (PPE51).